Here is a 100-residue protein sequence, read N- to C-terminus: Nucleoid-associated protein ckrop_0143 (100 aa).

The protein belongs to the YbaB/EbfC family. In terms of assembly, homodimer.

The protein localises to the cytoplasm. The protein resides in the nucleoid. Functionally, binds to DNA and alters its conformation. May be involved in regulation of gene expression, nucleoid organization and DNA protection. The chain is Nucleoid-associated protein ckrop_0143 from Corynebacterium kroppenstedtii (strain DSM 44385 / JCM 11950 / CIP 105744 / CCUG 35717).